The sequence spans 280 residues: MERTSNGGMLYHEVQESNLCAVHCVNTVLQGPFFSEFDLAAVAADLDGKERQVMLEGAAVGGFAPGDFLAEESHNVSLGGDFSIQVLQKALEVWDLQVIPLNCPDAEPAQIDPELESAFICHLHDHWFCIRKVNGEWYNFDSLLAAPQHLSKFYLSAFLDSLKGAGWSIFIVKGNFPQECPMSSSSEASNSFGQWLSPEDAERIRKNTSSGSSARNKRSNDNVNQQRRNQALSREEVQAFSEMEDDDLKAAIAASLLDASAAEANLGAVGTSEKETEKQK.

The Josephin domain occupies 7 to 187 (GGMLYHEVQE…QECPMSSSSE (181 aa)). The active-site Nucleophile is C20. H126 acts as the Proton acceptor in catalysis. D141 is an active-site residue. Composition is skewed to polar residues over residues 183–194 (SSSSEASNSFGQ) and 221–232 (DNVNQQRRNQAL). The interval 183–240 (SSSSEASNSFGQWLSPEDAERIRKNTSSGSSARNKRSNDNVNQQRRNQALSREEVQAF) is disordered. The UIM domain maps to 243–262 (MEDDDLKAAIAASLLDASAA).

It localises to the nucleus. The catalysed reaction is Thiol-dependent hydrolysis of ester, thioester, amide, peptide and isopeptide bonds formed by the C-terminal Gly of ubiquitin (a 76-residue protein attached to proteins as an intracellular targeting signal).. Functionally, interacts with key regulators of transcription and represses transcription. Acts as a histone-binding protein that regulates transcription. Acts as a deubiquitinating enzyme. In Arabidopsis thaliana (Mouse-ear cress), this protein is Ataxin-3 homolog.